The following is a 740-amino-acid chain: MSENHDAIVTDAKTEETDGCPVAHGRAPHPTQGGGNRQWWPERLNLKILAKNPAVANPLGEEFDYAEAFEALDLAAVKRDIAEVLTTSQDWWPADFGNYGPLMIRMAWHSAGTYRISDGRGGAGAGQQRFAPLNSWPDNGNLDKARRLLWPVKKKYGQNLSWADLLVLTGNVALETMGFETFGFAGGRADVWEAEEDVYWGPETTWLDDRRYTGDRELENPLGAVQMGLIYVNPEGPNGNPDPIAAARDIRETFRRMAMNDEETVALIAGGHTFGKTHGAGPADAVGDDPEAAAMEQQGLGWKSTHGTGKGGDAITSGLEVTWTSTPTQWGNGFFKNLFEFEYELEQSPAGANQWVAKDAPEIIPDAHDPAKKHRPRMLTTDLSLRLDPIYGPISRRFYENPEEFADAFARAWFKLTHRDMGPKSLYLGPEVPEETLIWQDPLPEPEGEVIDAEDVATLKTKLLESGLSVSQLVTTAWASASTFRGSDKRGGANGARIRLEPQRGWEVNEPDELAQVLRVLEGVQREFNSGSGAKKVSLADLIVLGGSAAVEKAAKEAGFPVEVPFAAGRVDATEEHTDAESFEALEPTADGFRNYLGKGNRLPAEFLLLDRANLLTLSAPEMTVLVGGLRVLGAGHQQSQLGVFTRTPGSLTNDFFVNLLDLGTTWKSTSEDRTTFEGRDAATGEVKWAGSRADLVFGSNAELRALAEVYASDDAGEKFVHDFVAAWVKVMNLDRFDLA.

Residues 1-16 (MSENHDAIVTDAKTEE) show a composition bias toward basic and acidic residues. The disordered stretch occupies residues 1–38 (MSENHDAIVTDAKTEETDGCPVAHGRAPHPTQGGGNRQ). The segment at residues 108–231 (WHSAGTYRIS…LGAVQMGLIY (124 aa)) is a cross-link (tryptophyl-tyrosyl-methioninium (Trp-Tyr) (with M-257)). His-109 functions as the Proton acceptor in the catalytic mechanism. Positions 231–257 (YVNPEGPNGNPDPIAAARDIRETFRRM) form a cross-link, tryptophyl-tyrosyl-methioninium (Tyr-Met) (with W-108). A heme b-binding site is contributed by His-272.

The protein belongs to the peroxidase family. Peroxidase/catalase subfamily. In terms of assembly, homodimer. Heme b serves as cofactor. Formation of the three residue Trp-Tyr-Met cross-link is important for the catalase, but not the peroxidase activity of the enzyme.

The catalysed reaction is H2O2 + AH2 = A + 2 H2O. The enzyme catalyses 2 H2O2 = O2 + 2 H2O. Functionally, bifunctional enzyme with both catalase and broad-spectrum peroxidase activity. This is Catalase-peroxidase from Streptomyces coelicolor (strain ATCC BAA-471 / A3(2) / M145).